Here is an 81-residue protein sequence, read N- to C-terminus: Large ribosomal subunit protein bL31B (81 aa).

The protein belongs to the bacterial ribosomal protein bL31 family. Type B subfamily. As to quaternary structure, part of the 50S ribosomal subunit.

In Halalkalibacterium halodurans (strain ATCC BAA-125 / DSM 18197 / FERM 7344 / JCM 9153 / C-125) (Bacillus halodurans), this protein is Large ribosomal subunit protein bL31B.